The sequence spans 252 residues: Trans-aconitate 2-methyltransferase (252 aa).

Belongs to the methyltransferase superfamily. Tam family.

It localises to the cytoplasm. It carries out the reaction trans-aconitate + S-adenosyl-L-methionine = (E)-3-(methoxycarbonyl)pent-2-enedioate + S-adenosyl-L-homocysteine. Functionally, catalyzes the S-adenosylmethionine monomethyl esterification of trans-aconitate. The protein is Trans-aconitate 2-methyltransferase of Shigella dysenteriae serotype 1 (strain Sd197).